The primary structure comprises 176 residues: NAD(P)H-quinone oxidoreductase subunit 6, chloroplastic (176 aa).

The next 5 helical transmembrane spans lie at 10 to 30, 33 to 53, 61 to 81, 92 to 112, and 152 to 172; these read FLLV…VLLA, IYSA…YILA, AQLL…VMFI, LWTV…VSLI, and FFLP…GAIA.

The protein belongs to the complex I subunit 6 family. In terms of assembly, NDH is composed of at least 16 different subunits, 5 of which are encoded in the nucleus.

It localises to the plastid. It is found in the chloroplast thylakoid membrane. The catalysed reaction is a plastoquinone + NADH + (n+1) H(+)(in) = a plastoquinol + NAD(+) + n H(+)(out). It catalyses the reaction a plastoquinone + NADPH + (n+1) H(+)(in) = a plastoquinol + NADP(+) + n H(+)(out). NDH shuttles electrons from NAD(P)H:plastoquinone, via FMN and iron-sulfur (Fe-S) centers, to quinones in the photosynthetic chain and possibly in a chloroplast respiratory chain. The immediate electron acceptor for the enzyme in this species is believed to be plastoquinone. Couples the redox reaction to proton translocation, and thus conserves the redox energy in a proton gradient. The polypeptide is NAD(P)H-quinone oxidoreductase subunit 6, chloroplastic (ndhG) (Guizotia abyssinica (Niger)).